The following is a 188-amino-acid chain: A-type ATP synthase subunit E (188 aa).

The protein belongs to the V-ATPase E subunit family. As to quaternary structure, has multiple subunits with at least A(3), B(3), C, D, E, F, H, I and proteolipid K(x).

Its subcellular location is the cell membrane. In terms of biological role, component of the A-type ATP synthase that produces ATP from ADP in the presence of a proton gradient across the membrane. The sequence is that of A-type ATP synthase subunit E from Archaeoglobus fulgidus (strain ATCC 49558 / DSM 4304 / JCM 9628 / NBRC 100126 / VC-16).